A 282-amino-acid chain; its full sequence is Heterogeneous nuclear ribonucleoprotein C (282 aa).

In terms of domain architecture, RRM spans 17 to 88 (SRVFIGNLNT…QVLDINLAAE (72 aa)). Disordered stretches follow at residues 131-177 (APPP…RLKG) and 208-282 (QSKQ…EEDS). Positions 141–147 (PSKRQRV) match the Nuclear localization signal motif. Residues 161–172 (SKSGQRGGSSKS) show a composition bias toward low complexity. Residues 177-217 (GDDLQAIKKELSQIKQRVDSLLENLERIERDQSKQDTKLDD) adopt a coiled-coil conformation. Composition is skewed to basic and acidic residues over residues 208 to 217 (QSKQDTKLDD) and 224 to 235 (LKKEETGVKLIE). Acidic residues-rich tracts occupy residues 236–257 (ETGD…EDTL) and 265–282 (KETE…EEDS).

The protein belongs to the RRM HNRPC family. RALY subfamily. As to quaternary structure, tetramer.

Its subcellular location is the nucleus. Functionally, binds pre-mRNA and nucleates the assembly of 40S hnRNP particles. Interacts with poly-U tracts in the 3'-UTR or 5'-UTR of mRNA and modulates the stability and the level of translation of bound mRNA molecules. Single HNRNPC tetramers bind 230-240 nucleotides. Trimers of HNRNPC tetramers bind 700 nucleotides. May play a role in the early steps of spliceosome assembly and pre-mRNA splicing. N6-methyladenosine (m6A) has been shown to alter the local structure in mRNAs and long non-coding RNAs (lncRNAs) via a mechanism named 'm(6)A-switch', facilitating binding of HNRNPC, leading to regulation of mRNA splicing. This Xenopus laevis (African clawed frog) protein is Heterogeneous nuclear ribonucleoprotein C (hnrnpc).